Consider the following 572-residue polypeptide: Delta-1-pyrroline-5-carboxylate dehydrogenase, mitochondrial (572 aa).

300–305 (GQISTR) contacts NAD(+). The Proton acceptor role is filled by Glu-320. The active-site Nucleophile is Cys-354.

It belongs to the aldehyde dehydrogenase family.

The protein resides in the mitochondrion matrix. The catalysed reaction is L-glutamate 5-semialdehyde + NAD(+) + H2O = L-glutamate + NADH + 2 H(+). It participates in amino-acid degradation; L-proline degradation into L-glutamate; L-glutamate from L-proline: step 2/2. This Emericella nidulans (strain FGSC A4 / ATCC 38163 / CBS 112.46 / NRRL 194 / M139) (Aspergillus nidulans) protein is Delta-1-pyrroline-5-carboxylate dehydrogenase, mitochondrial (prnC).